Reading from the N-terminus, the 405-residue chain is Acetate kinase (405 aa).

N10 provides a ligand contact to Mg(2+). An ATP-binding site is contributed by K17. R93 is a binding site for substrate. D150 serves as the catalytic Proton donor/acceptor. ATP-binding positions include 210 to 214, 284 to 286, and 332 to 336; these read HLGNG, DMR, and GVGEN. A Mg(2+)-binding site is contributed by E386.

This sequence belongs to the acetokinase family. As to quaternary structure, homodimer. Mg(2+) is required as a cofactor. The cofactor is Mn(2+).

The protein resides in the cytoplasm. The catalysed reaction is acetate + ATP = acetyl phosphate + ADP. It participates in metabolic intermediate biosynthesis; acetyl-CoA biosynthesis; acetyl-CoA from acetate: step 1/2. Functionally, catalyzes the formation of acetyl phosphate from acetate and ATP. Can also catalyze the reverse reaction. This Streptomyces avermitilis (strain ATCC 31267 / DSM 46492 / JCM 5070 / NBRC 14893 / NCIMB 12804 / NRRL 8165 / MA-4680) protein is Acetate kinase.